Consider the following 354-residue polypeptide: MYKKVKIIHVDMDCFFAAVEMRDNPALRDIPIAIGGSRERRGVISTANYPARKFGVRSAMPTGMALKLCPHLTLLPGRFDAYKEASNHIREIFSRYTSRIEPLSLDEAYLDVTDSVHCHGSATLIAQEIRQTIFNELQLTASAGVAPVKFLAKIASDMNKPNGQFVITPAEVPAFLQTLPLAKIPGVGKVSAAKLEAMGLRTCGDVQKCDLVMLLKRFGKFGRILWERSQGIDERDVNSERLRKSVGVERTMAEDIHHWSECEAIIERLYPELERRLAKVKPDLLIARQGVKLKFDDFQQTTQEHVWPRLNKADLIATARKTWDERRGGRGVRLVGLHVTLLDPQMERQLVLGL.

Residues 7–188 (IIHVDMDCFF…LPLAKIPGVG (182 aa)) form the UmuC domain. Residues D11 and D106 each coordinate Mg(2+). E107 is a catalytic residue.

This sequence belongs to the DNA polymerase type-Y family. As to quaternary structure, monomer. Requires Mg(2+) as cofactor.

It is found in the cytoplasm. It carries out the reaction DNA(n) + a 2'-deoxyribonucleoside 5'-triphosphate = DNA(n+1) + diphosphate. Functionally, poorly processive, error-prone DNA polymerase involved in untargeted mutagenesis. Copies undamaged DNA at stalled replication forks, which arise in vivo from mismatched or misaligned primer ends. These misaligned primers can be extended by PolIV. Exhibits no 3'-5' exonuclease (proofreading) activity. May be involved in translesional synthesis, in conjunction with the beta clamp from PolIII. This Shigella boydii serotype 18 (strain CDC 3083-94 / BS512) protein is DNA polymerase IV.